The primary structure comprises 468 residues: Heparan-sulfate 6-O-sulfotransferase 2 (468 aa).

Residues 1–9 (MDGKSNYSR) are Cytoplasmic-facing. A helical; Signal-anchor for type II membrane protein transmembrane segment spans residues 10-30 (LLIALLMILFFGGIVLQYICS). Residues 31 to 468 (TSDWQLLHLA…DYLENVEQWR (438 aa)) lie on the Lumenal side of the membrane. An N-linked (GlcNAc...) asparagine glycan is attached at Asn79. 3'-phosphoadenylyl sulfate is bound at residue 103–111 (HIQKTGGTT). Residues 133-134 (KK), Arg150, Trp155, and His160 contribute to the substrate site. Catalysis depends on His160, which acts as the Proton acceptor. 3'-phosphoadenylyl sulfate is bound by residues Arg197 and Ser205. 2 residues coordinate substrate: His209 and Trp216. A glycan (N-linked (GlcNAc...) asparagine) is linked at Asn276. 3'-phosphoadenylyl sulfate is bound at residue 329–331 (TQL). Asn332 is a glycosylation site (N-linked (GlcNAc...) asparagine). 335–336 (RA) is a binding site for 3'-phosphoadenylyl sulfate. The segment at 409–447 (FKPTKEPPMTEQSPAFAEEKQADAERTLESETEGQVEEN) is disordered. Residues 425–437 (AEEKQADAERTLE) show a composition bias toward basic and acidic residues. Over residues 438–447 (SETEGQVEEN) the composition is skewed to acidic residues.

Belongs to the sulfotransferase 6 family. In terms of tissue distribution, expressed ubiquitously during gastrulation. During early somitogenesis, strong expression in head and presumptive brain. During mid-somitogenesis, strong expression in eye, hindbrain and somitic boundaries and weak expression in tail bud. During late somitogenesis, strong expression in eye, hindbrain, branchial arch primordia, spinal cord and ventral medial somites. At 24 hours post-fertilization (hpf), strong expression throughout the head, with expression receeding from the trunk spinal cord, ventral medial somites and somitic boundaries; expressed in cells surrounding vascular structures of the dorsal aorta and caudal vein in the tail. At 36 hpf, expressed in lens, optic stalk, hindbrain and pectoral fin. At 48 hpf, expressed in eye, brain, otic vesicle and branchial arches.

The protein resides in the membrane. The catalysed reaction is alpha-D-glucosaminyl-[heparan sulfate](n) + 3'-phosphoadenylyl sulfate = 6-sulfo-alpha-D-glucosaminyl-[heparan sulfate](n) + adenosine 3',5'-bisphosphate + H(+). Functionally, 6-O-sulfation enzyme which catalyzes the transfer of sulfate from 3'-phosphoadenosine 5'-phosphosulfate (PAPS) to position 6 of the N-sulfoglucosamine residue (GlcNS) of heparan sulfate. Required for muscle development and angiogenesis. This Danio rerio (Zebrafish) protein is Heparan-sulfate 6-O-sulfotransferase 2 (hs6st2).